Consider the following 603-residue polypeptide: Vacuolar protein sorting-associated protein 33A (603 aa).

This sequence belongs to the STXBP/unc-18/SEC1 family. As to quaternary structure, probable component of the homotypic fusion and vacuole protein sorting (HOPS) complex consisting of the core class C Vps proteins vps-11, vps-16, vps-18, and which further associates with vps-33.1, vps-39 and vps-41. Interacts with spe-39. In terms of tissue distribution, ubiquitously expressed at high levels in somatic tissues including the pharynx, muscles, hypodermis, neurons, coelomocytes and spermatheca. Expressed in the intestine.

It is found in the lysosome. It localises to the early endosome. Its subcellular location is the late endosome. The protein localises to the apical cell membrane. Functionally, plays a role in vesicle-mediated protein trafficking to lysosomal compartments including the endocytic membrane transport pathways. Believed to act as a component of the putative HOPS endosomal tethering complex which is proposed to be involved in the rab-5-to-rab-7 endosome conversion probably implicating sand-1, and via binding SNAREs and SNARE complexes to mediate tethering and docking events during SNARE-mediated membrane fusion. The HOPS complex is proposed to be recruited to rab-7 on the late endosomal membrane and to regulate late endocytic, phagocytic and autophagic traffic towards lysosomes. Within the HOPS complex, contributes to the normal development of gut granules in embryonic and adult intestinal cells. Required for endosome/lysosome fusion. Required for early embryonic development. This chain is Vacuolar protein sorting-associated protein 33A, found in Caenorhabditis elegans.